The sequence spans 132 residues: ATP synthase epsilon chain (132 aa).

This sequence belongs to the ATPase epsilon chain family. F-type ATPases have 2 components, CF(1) - the catalytic core - and CF(0) - the membrane proton channel. CF(1) has five subunits: alpha(3), beta(3), gamma(1), delta(1), epsilon(1). CF(0) has three main subunits: a, b and c.

It is found in the cell inner membrane. Functionally, produces ATP from ADP in the presence of a proton gradient across the membrane. The polypeptide is ATP synthase epsilon chain (Anaeromyxobacter dehalogenans (strain 2CP-1 / ATCC BAA-258)).